We begin with the raw amino-acid sequence, 1160 residues long: Protein translocase subunit SecA (1160 aa).

ATP-binding positions include Gln162 and 180–184 (GEGKT). The interval 342 to 362 (LLEEKEEAEEEGDSRRAQELE) is disordered. Residues 344–353 (EEKEEAEEEG) show a composition bias toward acidic residues. Asp726 provides a ligand contact to ATP. The tract at residues 1060–1134 (EVQTEGQGPR…RNEYVTVRNN (75 aa)) is disordered. Residues 1074–1083 (QRNAQTQHDS) show a composition bias toward polar residues. Over residues 1104-1115 (AAERDPTVEEKQ) the composition is skewed to basic and acidic residues.

This sequence belongs to the SecA family. Monomer and homodimer. Part of the essential Sec protein translocation apparatus which comprises SecA, SecYEG and auxiliary proteins SecDF. Other proteins may also be involved.

The protein resides in the cell inner membrane. Its subcellular location is the cytoplasm. The catalysed reaction is ATP + H2O + cellular proteinSide 1 = ADP + phosphate + cellular proteinSide 2.. Part of the Sec protein translocase complex. Interacts with the SecYEG preprotein conducting channel. Has a central role in coupling the hydrolysis of ATP to the transfer of proteins into and across the cell membrane, serving as an ATP-driven molecular motor driving the stepwise translocation of polypeptide chains across the membrane. The chain is Protein translocase subunit SecA from Salinibacter ruber (strain DSM 13855 / M31).